The chain runs to 130 residues: Small ribosomal subunit protein uS9 (130 aa).

Belongs to the universal ribosomal protein uS9 family.

This chain is Small ribosomal subunit protein uS9, found in Bacillus velezensis (strain DSM 23117 / BGSC 10A6 / LMG 26770 / FZB42) (Bacillus amyloliquefaciens subsp. plantarum).